The sequence spans 207 residues: Inhibitor of hydrogen peroxide resistance (207 aa).

Positions 163–182 (MNYIHQRTRISRSVVAEVLA) form a DNA-binding region, H-T-H motif.

The protein belongs to the IprA family.

Involved in oxidative stress resistance. This is Inhibitor of hydrogen peroxide resistance from Escherichia coli O157:H7.